We begin with the raw amino-acid sequence, 373 residues long: ATP phosphoribosyltransferase regulatory subunit (373 aa).

Belongs to the class-II aminoacyl-tRNA synthetase family. HisZ subfamily. Heteromultimer composed of HisG and HisZ subunits.

Its subcellular location is the cytoplasm. It participates in amino-acid biosynthesis; L-histidine biosynthesis; L-histidine from 5-phospho-alpha-D-ribose 1-diphosphate: step 1/9. In terms of biological role, required for the first step of histidine biosynthesis. May allow the feedback regulation of ATP phosphoribosyltransferase activity by histidine. This chain is ATP phosphoribosyltransferase regulatory subunit, found in Rhizobium leguminosarum bv. trifolii (strain WSM2304).